Consider the following 181-residue polypeptide: Shikimate kinase (181 aa).

23-28 (GTGKST) is a binding site for ATP. S27 contacts Mg(2+). Substrate-binding residues include D45, R69, and G91. Position 129 (R129) interacts with ATP. A substrate-binding site is contributed by R148.

It belongs to the shikimate kinase family. In terms of assembly, monomer. Mg(2+) is required as a cofactor.

The protein resides in the cytoplasm. It catalyses the reaction shikimate + ATP = 3-phosphoshikimate + ADP + H(+). Its pathway is metabolic intermediate biosynthesis; chorismate biosynthesis; chorismate from D-erythrose 4-phosphate and phosphoenolpyruvate: step 5/7. Functionally, catalyzes the specific phosphorylation of the 3-hydroxyl group of shikimic acid using ATP as a cosubstrate. The polypeptide is Shikimate kinase (Geobacter sulfurreducens (strain ATCC 51573 / DSM 12127 / PCA)).